The following is a 406-amino-acid chain: MQVYLVGGAVRDHLLGIDIYDRDWVVVGATPEIMLSQGYTAVGKDFPVFLHPKTKEEHALARTERKSGAGYTGFECFFDQSVTLEEDLIRRDLTINAMAMDEDGNLYDPYGGQKDIDAKVLRHVSQAFVEDPLRVLRVARFAAKLAHLGFSVAEETMQLMRDMAESGELSTLTPERVWQEWHKSLSTSRPDVFLSVLRDCGALAVVLPEIDALFGVPQPEKWHPEIDTGIHTLMVAQQAAKLSDSLPVRFAAQVHDLGKGVTPESEWPSHKMHCHTGLKLIKKLCDRVRVPNEFRDLALMVCEQHSNIHRAAELKPQTIIKILNKFDVWRKAERLQDILICCQADHAGRKGLEDQPYPQAELFMRAYQAAASVDVQAIIKDGFKGPAIRDEQEKRRAEAVKVALGK.

Residues Gly8 and Arg11 each coordinate ATP. The CTP site is built by Gly8 and Arg11. The Mg(2+) site is built by Asp21 and Asp23. ATP-binding residues include Arg91, Arg137, and Arg140. Residues Arg91, Arg137, and Arg140 each coordinate CTP. The region spanning 228–329 (TGIHTLMVAQ…IKILNKFDVW (102 aa)) is the HD domain.

It belongs to the tRNA nucleotidyltransferase/poly(A) polymerase family. Bacterial CCA-adding enzyme type 1 subfamily. Monomer. Can also form homodimers and oligomers. The cofactor is Mg(2+). Requires Ni(2+) as cofactor.

The catalysed reaction is a tRNA precursor + 2 CTP + ATP = a tRNA with a 3' CCA end + 3 diphosphate. It carries out the reaction a tRNA with a 3' CCA end + 2 CTP + ATP = a tRNA with a 3' CCACCA end + 3 diphosphate. In terms of biological role, catalyzes the addition and repair of the essential 3'-terminal CCA sequence in tRNAs without using a nucleic acid template. Adds these three nucleotides in the order of C, C, and A to the tRNA nucleotide-73, using CTP and ATP as substrates and producing inorganic pyrophosphate. tRNA 3'-terminal CCA addition is required both for tRNA processing and repair. Also involved in tRNA surveillance by mediating tandem CCA addition to generate a CCACCA at the 3' terminus of unstable tRNAs. While stable tRNAs receive only 3'-terminal CCA, unstable tRNAs are marked with CCACCA and rapidly degraded. The protein is Multifunctional CCA protein of Vibrio campbellii (strain ATCC BAA-1116).